The primary structure comprises 837 residues: ABC transporter A family member 8 (837 aa).

Transmembrane regions (helical) follow at residues 29 to 49 (YFSTIIELLSPIVFVLIFYII), 244 to 264 (VVSLFGGLFYYCAIMISFIFL), 303 to 323 (LIICLLLIAIGAICKLPFFLG), 326 to 346 (FLVLLLNFFLFAISSSSMAFF), 356 to 376 (VAIGIGMAFFIVGSGLQLTFN), 393 to 413 (GAAFVRVILFILPMFHFSKVL), and 455 to 475 (LAYMFILVIVYLSLSAIIEYA). Residues 516-750 (IRGLSKTFNK…YGEGYSVQVI (235 aa)) form the ABC transporter domain. 553 to 560 (GSNGAGKS) contacts ATP.

This sequence belongs to the ABC transporter superfamily. ABCA family.

Its subcellular location is the membrane. The sequence is that of ABC transporter A family member 8 (abcA8) from Dictyostelium discoideum (Social amoeba).